The chain runs to 278 residues: S-adenosylmethionine decarboxylase proenzyme (278 aa).

Residues 96-115 (LTPESLTGESPGPLPGNKPS) form a disordered region. Serine 126 acts as the Schiff-base intermediate with substrate; via pyruvic acid in catalysis. Residue serine 126 is modified to Pyruvic acid (Ser); by autocatalysis. Histidine 131 serves as the catalytic Proton acceptor; for processing activity. Cysteine 154 functions as the Proton donor; for catalytic activity in the catalytic mechanism.

It belongs to the prokaryotic AdoMetDC family. Type 2 subfamily. Heterooctamer of four alpha and four beta chains arranged as a tetramer of alpha/beta heterodimers. It depends on pyruvate as a cofactor. Post-translationally, is synthesized initially as an inactive proenzyme. Formation of the active enzyme involves a self-maturation process in which the active site pyruvoyl group is generated from an internal serine residue via an autocatalytic post-translational modification. Two non-identical subunits are generated from the proenzyme in this reaction, and the pyruvate is formed at the N-terminus of the alpha chain, which is derived from the carboxyl end of the proenzyme. The post-translation cleavage follows an unusual pathway, termed non-hydrolytic serinolysis, in which the side chain hydroxyl group of the serine supplies its oxygen atom to form the C-terminus of the beta chain, while the remainder of the serine residue undergoes an oxidative deamination to produce ammonia and the pyruvoyl group blocking the N-terminus of the alpha chain.

It carries out the reaction S-adenosyl-L-methionine + H(+) = S-adenosyl 3-(methylsulfanyl)propylamine + CO2. It functions in the pathway amine and polyamine biosynthesis; S-adenosylmethioninamine biosynthesis; S-adenosylmethioninamine from S-adenosyl-L-methionine: step 1/1. Its function is as follows. Catalyzes the decarboxylation of S-adenosylmethionine to S-adenosylmethioninamine (dcAdoMet), the propylamine donor required for the synthesis of the polyamines spermine and spermidine from the diamine putrescine. In Alkaliphilus metalliredigens (strain QYMF), this protein is S-adenosylmethionine decarboxylase proenzyme.